Reading from the N-terminus, the 347-residue chain is Quinolinate synthase (347 aa).

His-47 and Ser-68 together coordinate iminosuccinate. Residue Cys-113 participates in [4Fe-4S] cluster binding. Iminosuccinate is bound by residues 139-141 (YAN) and Ser-156. Cys-200 lines the [4Fe-4S] cluster pocket. Residues 226 to 228 (HPE) and Thr-243 contribute to the iminosuccinate site. Cys-297 is a binding site for [4Fe-4S] cluster.

The protein belongs to the quinolinate synthase family. Type 1 subfamily. Requires [4Fe-4S] cluster as cofactor.

It localises to the cytoplasm. It carries out the reaction iminosuccinate + dihydroxyacetone phosphate = quinolinate + phosphate + 2 H2O + H(+). It functions in the pathway cofactor biosynthesis; NAD(+) biosynthesis; quinolinate from iminoaspartate: step 1/1. Catalyzes the condensation of iminoaspartate with dihydroxyacetone phosphate to form quinolinate. This chain is Quinolinate synthase, found in Salmonella heidelberg (strain SL476).